The following is a 465-amino-acid chain: MSDSRTTTTKNNTTNHKTSRQGPGSACEECRRRKLRCDRQPQCQNCVDAGVYCVTNLARPARGPKKGHLKALKGRIATLERCLLEQRDGMLVDPISDDELLDKALSASSPASQSPDPSEEVSENILEDLDQVFFERVQPMVPILQRHRYFSWAREPQQSANRRGLQQAIRTLAAGVSSQLPEVRVALYRTTRHTLESLESDDTLLTAPDFEQVQAWILIAIYEFMQVSYSRGWMSAGRVFRLVQLLRLPEIDASPLSLLDLDLDPDSKWVVAEEKRRTVWMAYIMDCSLNLRHKGSLTLTEQALTRLPMPESEFQCGHPISMGFLAEALAGTDITSPLSSFAKCILLATISGRTLSHRHLSMAELLRGNPLQDVWTRHQWIDTTLTAHLQLSFSLPTAAESSDPMLLFAKMIGQAGVLSLYDILQSTPWEPETVSLLPDYEACALQAARETVVLARNLRHFSCFK.

Residues 1–16 (MSDSRTTTTKNNTTNH) show a composition bias toward low complexity. Positions 1-25 (MSDSRTTTTKNNTTNHKTSRQGPGS) are disordered. The segment at residues 27–53 (CEECRRRKLRCDRQPQCQNCVDAGVYC) is a DNA-binding region (zn(2)-C6 fungal-type).

Its subcellular location is the nucleus. Functionally, transcription factor that regulates the expression of the gene cluster that mediates the biosynthesis of azaphilones, a class of fungal metabolites characterized by a highly oxygenated pyrano-quinone bicyclic core and exhibiting a broad range of bioactivities. The sequence is that of Azaphilone cluster-specific transcription factor azaR from Aspergillus niger (strain ATCC 1015 / CBS 113.46 / FGSC A1144 / LSHB Ac4 / NCTC 3858a / NRRL 328 / USDA 3528.7).